The chain runs to 192 residues: Protein hunchback (192 aa).

Disordered stretches follow at residues 16–59 (SHHH…SNTN), 88–108 (AAMTPSPSNNDQNSPLTWPGL), and 151–192 (ALTP…KYMA). Residues 17-31 (HHHHHHHAHHSRRQH) are compositionally biased toward basic residues. The span at 92-103 (PSPSNNDQNSPL) shows a compositional bias: polar residues. Positions 173–192 (EPEKEHDLMSNSSEDMKYMA) are enriched in basic and acidic residues.

Belongs to the hunchback C2H2-type zinc-finger protein family.

It localises to the nucleus. Its function is as follows. Gap class segmentation protein that controls development of head structures. The sequence is that of Protein hunchback (hb) from Drosophila adiastola (Fruit fly).